A 408-amino-acid polypeptide reads, in one-letter code: Snake venom 5'-nucleotidase (408 aa).

Zn(2+) contacts are provided by His54 and His77. N-linked (GlcNAc...) asparagine glycosylation is found at Asn167 and Asn181. Disulfide bonds link Cys187–Cys192 and Cys199–Cys221. Arg188 serves as a coordination point for AMP. The AMP site is built by Asn224, Arg229, and Phe252. Cysteines 311 and 314 form a disulfide. AMP is bound by residues Phe335 and Asp341. 2 consecutive propeptides (removed in mature form) follow at residues 385–388 (DGTL) and 385–408 (DGTL…FFIL).

Belongs to the 5'-nucleotidase family. In terms of assembly, homodimer. Post-translationally, venom 5'-nucleotidases (or a part thereof) may be released into the venom via exosome-like vesicles. They may be attached via a GPI anchor to the membrane of these vesicles. Soluble forms of 5'-nucleotidase might be released by cleavage of the ectodomain in the exosome-like vesicles or venom gland cells. In terms of tissue distribution, expressed by the venom gland.

It localises to the membrane. The catalysed reaction is a ribonucleoside 5'-phosphate + H2O = a ribonucleoside + phosphate. It catalyses the reaction AMP + H2O = adenosine + phosphate. The enzyme catalyses GMP + H2O = guanosine + phosphate. It carries out the reaction ADP + H2O = AMP + phosphate + H(+). Its activity is regulated as follows. Is potently inhibited by metal ions Fe(3+), Cu(2+) and Zn(2+). Is enhanced by Mn(2+). Ca(2+) and Mg(2+) have no effect. Its function is as follows. Hydrolyzes nucleotides into nucleosides. Prefers AMP as the substrate but also cleaves GMP and ADP. Does not affect AMP, cAMP and cGMP. Inhibits ADP- and collagen-induced platelet aggregation. Snake venom 5'-nucleotidases are widely distributed among venomous snake taxa, but there is a lack of information about their biological activities. They have been shown to inhibit platelet aggregation. This effect may be due to the liberation of inhibitory AMP or adenosine by its action on ADP released upon initiation of aggregation. Venom 5'-nucleotidases are also known to synergistically act in vivo with other toxins like ADPases, phospholipases, and disintegrins to exert a more pronounced anti-coagulant effect. This chain is Snake venom 5'-nucleotidase, found in Macrovipera lebetinus (Levantine viper).